An 899-amino-acid chain; its full sequence is ATP-dependent DNA helicase DDX31 (899 aa).

2 stretches are compositionally biased toward basic residues: residues 1–12 (MNKHDQKKKRNK) and 21–31 (KKSKGFIKNKK). The segment at 1 to 142 (MNKHDQKKKR…SKHKRNVPSK (142 aa)) is disordered. Over residues 76-85 (NMNDDDDNNM) the composition is skewed to acidic residues. A compositionally biased stretch (low complexity) spans 86–102 (NDDYNNNNIKGDYNNNN). The segment covering 106–121 (DDVDDDDYDDDDDDNF) has biased composition (acidic residues). The short motif at 173-201 (FCDLKYILSESLINTLEKNEFIKMTSIQK) is the Q motif element. Residues 204 to 433 (IPLFFKPNDI…NYCLTNNTMW (230 aa)) enclose the Helicase ATP-binding domain. An ATP-binding site is contributed by 217–224 (SMTGSGKT). The short motif at 332-335 (DEAD) is the DEAD box element. Residues 463–472 (NRENSPLNIH) show a composition bias toward polar residues. The tract at residues 463-517 (NRENSPLNIHNNDDNDDNDDNDENNGDNNNNNDDNNNNNDDNNNKNNDDDNNNTY) is disordered. Residues 476–487 (DNDDNDDNDENN) show a composition bias toward acidic residues. Low complexity predominate over residues 488–503 (GDNNNNNDDNNNNNDD). The region spanning 593–782 (KITPVLERED…TIINHFKKFC (190 aa)) is the Helicase C-terminal domain.

This sequence belongs to the DEAD box helicase family. DDX31/DBP7 subfamily.

It is found in the nucleus. It localises to the nucleolus. The enzyme catalyses ATP + H2O = ADP + phosphate + H(+). Its function is as follows. Has DNA helicase activity and may also have RNA helicase activity; the DNA helicase direction was not determined. Shows ssDNA and RNA dependent ATPase activity. In Plasmodium falciparum (isolate 3D7), this protein is ATP-dependent DNA helicase DDX31 (DDX31).